Consider the following 259-residue polypeptide: Ribosome maturation factor RimP (259 aa).

Residues 186 to 195 show a composition bias toward basic and acidic residues; sequence RGKQAERELK. The interval 186–259 is disordered; sequence RGKQAERELK…RGDTDLSEGD (74 aa). The span at 239 to 248 shows a compositional bias: basic residues; the sequence is KQHRLAAGRS.

This sequence belongs to the RimP family.

It is found in the cytoplasm. In terms of biological role, required for maturation of 30S ribosomal subunits. The polypeptide is Ribosome maturation factor RimP (Rhodopseudomonas palustris (strain HaA2)).